The chain runs to 351 residues: Peptide chain release factor 1 (351 aa).

At Q230 the chain carries N5-methylglutamine.

Belongs to the prokaryotic/mitochondrial release factor family. In terms of processing, methylated by PrmC. Methylation increases the termination efficiency of RF1.

It localises to the cytoplasm. Its function is as follows. Peptide chain release factor 1 directs the termination of translation in response to the peptide chain termination codons UAG and UAA. This chain is Peptide chain release factor 1, found in Onion yellows phytoplasma (strain OY-M).